Here is a 274-residue protein sequence, read N- to C-terminus: Large ribosomal subunit protein uL2 (274 aa).

Residues 195 to 274 (VGNSDHGLER…SKYIIERRKK (80 aa)) are disordered. Basic residues-rich tracts occupy residues 207–220 (KAGR…RPRN) and 244–264 (PRSR…KKQS).

It belongs to the universal ribosomal protein uL2 family. In terms of assembly, part of the 50S ribosomal subunit. Forms a bridge to the 30S subunit in the 70S ribosome.

One of the primary rRNA binding proteins. Required for association of the 30S and 50S subunits to form the 70S ribosome, for tRNA binding and peptide bond formation. It has been suggested to have peptidyltransferase activity; this is somewhat controversial. Makes several contacts with the 16S rRNA in the 70S ribosome. The sequence is that of Large ribosomal subunit protein uL2 from Bacteroides thetaiotaomicron (strain ATCC 29148 / DSM 2079 / JCM 5827 / CCUG 10774 / NCTC 10582 / VPI-5482 / E50).